The primary structure comprises 440 residues: Thymidine phosphorylase (440 aa).

It belongs to the thymidine/pyrimidine-nucleoside phosphorylase family. Homodimer.

The catalysed reaction is thymidine + phosphate = 2-deoxy-alpha-D-ribose 1-phosphate + thymine. It participates in pyrimidine metabolism; dTMP biosynthesis via salvage pathway; dTMP from thymine: step 1/2. The enzymes which catalyze the reversible phosphorolysis of pyrimidine nucleosides are involved in the degradation of these compounds and in their utilization as carbon and energy sources, or in the rescue of pyrimidine bases for nucleotide synthesis. The protein is Thymidine phosphorylase of Escherichia coli O139:H28 (strain E24377A / ETEC).